We begin with the raw amino-acid sequence, 158 residues long: Protein ORF4 (158 aa).

Its function is as follows. Acts by interacting with multiple viral and host proteins to enhance the activity of viral RNA-dependent RNA polymerase. This chain is Protein ORF4, found in Hepatitis E virus genotype 1 (isolate Human/Pakistan/Sar-55) (HEV-1).